The chain runs to 249 residues: 3-deoxy-manno-octulosonate cytidylyltransferase (249 aa).

This sequence belongs to the KdsB family.

It is found in the cytoplasm. It catalyses the reaction 3-deoxy-alpha-D-manno-oct-2-ulosonate + CTP = CMP-3-deoxy-beta-D-manno-octulosonate + diphosphate. The protein operates within nucleotide-sugar biosynthesis; CMP-3-deoxy-D-manno-octulosonate biosynthesis; CMP-3-deoxy-D-manno-octulosonate from 3-deoxy-D-manno-octulosonate and CTP: step 1/1. It participates in bacterial outer membrane biogenesis; lipopolysaccharide biosynthesis. Functionally, activates KDO (a required 8-carbon sugar) for incorporation into bacterial lipopolysaccharide in Gram-negative bacteria. The chain is 3-deoxy-manno-octulosonate cytidylyltransferase from Coxiella burnetii (strain RSA 331 / Henzerling II).